The chain runs to 158 residues: Small ribosomal subunit protein uS9 (158 aa).

The protein belongs to the universal ribosomal protein uS9 family.

This is Small ribosomal subunit protein uS9 from Rhodopseudomonas palustris (strain BisA53).